The following is an 800-amino-acid chain: Phenylalanine--tRNA ligase beta subunit (800 aa).

Residues 39-147 enclose the tRNA-binding domain; sequence FDAIADIVVG…QDSVPGVRLV (109 aa). In terms of domain architecture, B5 spans 401–477; that stretch reads WQAAQLRFRP…RVYGMDNIPP (77 aa). Residues aspartate 455, aspartate 461, glutamate 464, and glutamate 465 each coordinate Mg(2+). Positions 706-800 constitute an FDX-ACB domain; sequence PVFPPVKRDI…SLTEALGVRI (95 aa).

This sequence belongs to the phenylalanyl-tRNA synthetase beta subunit family. Type 1 subfamily. Tetramer of two alpha and two beta subunits. Mg(2+) is required as a cofactor.

Its subcellular location is the cytoplasm. It carries out the reaction tRNA(Phe) + L-phenylalanine + ATP = L-phenylalanyl-tRNA(Phe) + AMP + diphosphate + H(+). The protein is Phenylalanine--tRNA ligase beta subunit of Oleidesulfovibrio alaskensis (strain ATCC BAA-1058 / DSM 17464 / G20) (Desulfovibrio alaskensis).